Consider the following 435-residue polypeptide: tRNA modification GTPase MnmE (435 aa).

Residues Arg-20, Glu-77, and Lys-117 each coordinate (6S)-5-formyl-5,6,7,8-tetrahydrofolate. In terms of domain architecture, TrmE-type G spans 214–359; sequence GLKIVIAGAP…FIKKLESFCH (146 aa). Residues 224-229, 243-249, and 268-271 contribute to the GTP site; these read NSGKSS, TEEAGTT, and DTAG. Mg(2+) is bound by residues Ser-228 and Thr-249. Residue Lys-435 coordinates (6S)-5-formyl-5,6,7,8-tetrahydrofolate.

It belongs to the TRAFAC class TrmE-Era-EngA-EngB-Septin-like GTPase superfamily. TrmE GTPase family. Homodimer. Heterotetramer of two MnmE and two MnmG subunits. K(+) serves as cofactor.

It localises to the cytoplasm. Functionally, exhibits a very high intrinsic GTPase hydrolysis rate. Involved in the addition of a carboxymethylaminomethyl (cmnm) group at the wobble position (U34) of certain tRNAs, forming tRNA-cmnm(5)s(2)U34. This chain is tRNA modification GTPase MnmE, found in Bartonella tribocorum (strain CIP 105476 / IBS 506).